Here is a 189-residue protein sequence, read N- to C-terminus: ATP synthase subunit delta (189 aa).

The protein belongs to the ATPase delta chain family. F-type ATPases have 2 components, F(1) - the catalytic core - and F(0) - the membrane proton channel. F(1) has five subunits: alpha(3), beta(3), gamma(1), delta(1), epsilon(1). F(0) has three main subunits: a(1), b(2) and c(10-14). The alpha and beta chains form an alternating ring which encloses part of the gamma chain. F(1) is attached to F(0) by a central stalk formed by the gamma and epsilon chains, while a peripheral stalk is formed by the delta and b chains.

The protein resides in the cell inner membrane. Its function is as follows. F(1)F(0) ATP synthase produces ATP from ADP in the presence of a proton or sodium gradient. F-type ATPases consist of two structural domains, F(1) containing the extramembraneous catalytic core and F(0) containing the membrane proton channel, linked together by a central stalk and a peripheral stalk. During catalysis, ATP synthesis in the catalytic domain of F(1) is coupled via a rotary mechanism of the central stalk subunits to proton translocation. Functionally, this protein is part of the stalk that links CF(0) to CF(1). It either transmits conformational changes from CF(0) to CF(1) or is implicated in proton conduction. This chain is ATP synthase subunit delta, found in Ehrlichia ruminantium (strain Gardel).